A 557-amino-acid polypeptide reads, in one-letter code: Dihydroxy-acid dehydratase (557 aa).

Residue Cys-50 coordinates [2Fe-2S] cluster. Residue Asp-82 coordinates Mg(2+). Cys-123 serves as a coordination point for [2Fe-2S] cluster. Asp-124 and Lys-125 together coordinate Mg(2+). Lys-125 bears the N6-carboxylysine mark. Cys-195 contacts [2Fe-2S] cluster. Glu-447 is a binding site for Mg(2+). The Proton acceptor role is filled by Ser-473.

It belongs to the IlvD/Edd family. In terms of assembly, homodimer. It depends on [2Fe-2S] cluster as a cofactor. The cofactor is Mg(2+).

It carries out the reaction (2R)-2,3-dihydroxy-3-methylbutanoate = 3-methyl-2-oxobutanoate + H2O. The enzyme catalyses (2R,3R)-2,3-dihydroxy-3-methylpentanoate = (S)-3-methyl-2-oxopentanoate + H2O. It participates in amino-acid biosynthesis; L-isoleucine biosynthesis; L-isoleucine from 2-oxobutanoate: step 3/4. It functions in the pathway amino-acid biosynthesis; L-valine biosynthesis; L-valine from pyruvate: step 3/4. In terms of biological role, functions in the biosynthesis of branched-chain amino acids. Catalyzes the dehydration of (2R,3R)-2,3-dihydroxy-3-methylpentanoate (2,3-dihydroxy-3-methylvalerate) into 2-oxo-3-methylpentanoate (2-oxo-3-methylvalerate) and of (2R)-2,3-dihydroxy-3-methylbutanoate (2,3-dihydroxyisovalerate) into 2-oxo-3-methylbutanoate (2-oxoisovalerate), the penultimate precursor to L-isoleucine and L-valine, respectively. This is Dihydroxy-acid dehydratase from Nitrosospira multiformis (strain ATCC 25196 / NCIMB 11849 / C 71).